Here is a 168-residue protein sequence, read N- to C-terminus: MQIDPSHYQIAVEQAQAVAAAARSCRCRRRGRRADLDALVVSKENRENAAHSASSADAQYQQAIAALDARSSTLERSRVVAPVDGYITNLQTFKGNYAVAGQAKLAIVDSHSFWVYGYFEETKLPRVKIGAPAEMRLMSGGVMKGHVESISRGIYDRDNPQSRDLVRT.

Its function is as follows. Involved in the resistance (detoxification) of the fungal toxin fusaric acid. The sequence is that of Fusaric acid resistance protein FusE (fusE) from Burkholderia cepacia (Pseudomonas cepacia).